The primary structure comprises 102 residues: Integration host factor subunit beta (102 aa).

It belongs to the bacterial histone-like protein family. As to quaternary structure, heterodimer of an alpha and a beta chain.

In terms of biological role, this protein is one of the two subunits of integration host factor, a specific DNA-binding protein that functions in genetic recombination as well as in transcriptional and translational control. This chain is Integration host factor subunit beta, found in Rhodopseudomonas palustris (strain BisA53).